The sequence spans 299 residues: Mitochondrial 2-oxodicarboxylate carrier (299 aa).

Solcar repeat units lie at residues 11–100 (NEAS…YKKL), 107–196 (SPAL…VKNI), and 205–294 (LEFL…TYSW). The next 6 helical transmembrane spans lie at 17–37 (ILAG…LDVV), 62–82 (MIFR…PILA), 100–120 (LLGY…LGSG), 179–199 (HGVF…IIPV), 211–231 (FGIG…FDVA), and 274–290 (IMRL…VYEY).

This sequence belongs to the mitochondrial carrier (TC 2.A.29) family.

It is found in the mitochondrion inner membrane. It catalyses the reaction 2-oxoadipate(in) + 2-oxoglutarate(out) = 2-oxoadipate(out) + 2-oxoglutarate(in). It carries out the reaction hexanedioate(in) + 2-oxoglutarate(out) = hexanedioate(out) + 2-oxoglutarate(in). The catalysed reaction is L-2-aminoadipate(in) + 2-oxoglutarate(out) = L-2-aminoadipate(out) + 2-oxoglutarate(in). The enzyme catalyses glutarate(in) + 2-oxoglutarate(out) = glutarate(out) + 2-oxoglutarate(in). It catalyses the reaction 2-oxoheptanedioate(in) + 2-oxoglutarate(out) = 2-oxoheptanedioate(out) + 2-oxoglutarate(in). It carries out the reaction heptanedioate(in) + 2-oxoglutarate(out) = heptanedioate(out) + 2-oxoglutarate(in). The catalysed reaction is citrate(in) + 2-oxoglutarate(out) = citrate(out) + 2-oxoglutarate(in). Transports dicarboxylates across the inner membranes of mitochondria by a counter-exchange mechanism. Can transport 2-oxoadipate (2-oxohexanedioate), 2-oxoglutarate, adipate (hexanedioate), glutarate, and to a lesser extent, pimelate (heptanedioate), 2-oxopimelate (2-oxoheptanedioate), 2-aminoadipate (2-aminohexanedioate), oxaloacetate, and citrate. Plays a central role in catabolism of lysine, hydroxylysine, and tryptophan, by transporting common metabolite intermediates (such as 2-oxoadipate) into the mitochondria, where it is converted into acetyl-CoA and can enter the citric acid (TCA) cycle. The chain is Mitochondrial 2-oxodicarboxylate carrier (SLC25A21) from Bos taurus (Bovine).